We begin with the raw amino-acid sequence, 154 residues long: Fimbrial protein (154 aa).

Positions 1–6 (MKAQKG) are cleaved as a propeptide — leader sequence. An N-methylphenylalanine modification is found at F7. Residues 7–27 (FTLIELMIVVAIIGILAAIAI) traverse the membrane as a helical segment. C133 and C151 are disulfide-bonded.

Belongs to the N-Me-Phe pilin family. The pili are polar flexible filaments of about 5.4 nanometers diameter and 2.5 micrometers average length; they consist of only a single polypeptide chain arranged in a helical configuration of five subunits per turn in the assembled pilus.

The protein resides in the fimbrium. The protein localises to the membrane. In Pseudomonas aeruginosa, this protein is Fimbrial protein (pilA).